We begin with the raw amino-acid sequence, 374 residues long: Pectate lyase 1 (374 aa).

Positions 1–22 are cleaved as a signal peptide; that stretch reads MKYLLPSAAAGLLLLAAQPTMA. Cys93 and Cys176 are joined by a disulfide. Asp150, Asp152, Glu187, and Asp191 together coordinate Ca(2+). Arg239 is a catalytic residue. Cys350 and Cys373 are joined by a disulfide.

Belongs to the polysaccharide lyase 1 family. PLADES subfamily. Ca(2+) serves as cofactor.

The protein resides in the secreted. It catalyses the reaction Eliminative cleavage of (1-&gt;4)-alpha-D-galacturonan to give oligosaccharides with 4-deoxy-alpha-D-galact-4-enuronosyl groups at their non-reducing ends.. It participates in glycan metabolism; pectin degradation; 2-dehydro-3-deoxy-D-gluconate from pectin: step 2/5. Functionally, involved in maceration and soft-rotting of plant tissue. The chain is Pectate lyase 1 (pel1) from Pectobacterium carotovorum (Erwinia carotovora).